Here is a 2718-residue protein sequence, read N- to C-terminus: Zinc finger protein 40 (2718 aa).

3 disordered regions span residues 58–182 (HLKK…CISS), 210–256 (LSQK…AESQ), and 335–373 (GLTS…PMPI). Position 141 is a phosphoserine (Ser141). The segment covering 142 to 158 (ELRRWRSEGADPAKFSD) has biased composition (basic and acidic residues). Polar residues-rich tracts occupy residues 164 to 182 (DSSS…CISS) and 237 to 256 (KNSS…AESQ). A C2H2-type 1 zinc finger spans residues 406-428 (YICEYCNRACAKPSVLLKHIRSH). The residue at position 429 (Thr429) is a Phosphothreonine. The C2H2-type 2 zinc-finger motif lies at 434–456 (YPCVTCGFSFKTKSNLYKHKKSH). Ser476, Ser479, Ser492, Ser495, Ser571, and Ser577 each carry phosphoserine. Residues 484-511 (SIHSDVEDSGESEEEGATDERQHDLGAM) form a disordered region. Acidic residues predominate over residues 490-500 (EDSGESEEEGA). The tract at residues 574-727 (RTDSPKAMDP…TPSALPTGEK (154 aa)) is disordered. Residues 576 to 585 (DSPKAMDPKP) are compositionally biased toward basic and acidic residues. Positions 588–612 (SSAQKQKDLQVTNVQPLSANMSQGG) are enriched in polar residues. Basic and acidic residues predominate over residues 617 to 626 (ETNENSHQKG). Polar residues-rich tracts occupy residues 644–687 (AQLQ…QTVS) and 698–721 (STEQ…TPSA). Phosphoserine is present on residues Ser670 and Ser681. A CCHC HIVEP-type zinc finger spans residues 956–986 (GTMFECETCRNRYRKLENFENHKKFYCSELH). Residues 1022-1062 (WEQTPQIRKRRKMKSVGDDEELQQNESGTSPKSSEGLQFQN) form a disordered region. Phosphoserine occurs at positions 1036, 1051, 1091, 1158, 1161, and 1180. Positions 1045–1062 (QNESGTSPKSSEGLQFQN) are enriched in polar residues. The tract at residues 1138 to 1169 (HTNSLSRPNSFDKPEPFERASPVSFQELNRTG) is disordered. Residues 1160-1169 (VSFQELNRTG) are compositionally biased toward polar residues. Basic and acidic residues-rich tracts occupy residues 1202–1219 (LRGE…ERHV) and 1246–1259 (DLEA…KSEK). Disordered regions lie at residues 1202 to 1282 (LRGE…PKKK), 1384 to 1414 (RSKS…SRVG), and 1523 to 1548 (SHQS…VLSG). At Thr1268 the chain carries Phosphothreonine. Low complexity-rich tracts occupy residues 1394-1406 (TPPQ…ELQP) and 1523-1536 (SHQS…VSTQ). 4 positions are modified to phosphoserine: Ser1735, Ser1740, Ser1749, and Ser1753. Polar residues predominate over residues 1871–1883 (VRSSPAPSENTHI). Positions 1871 to 1911 (VRSSPAPSENTHISPLKCTDNNQERKSPGVKNQGDKVNIQE) are disordered. Ser1884 and Ser2033 each carry phosphoserine. C2H2-type zinc fingers lie at residues 2088–2110 (YICE…IRTH) and 2116–2140 (YHCT…SKAH). Disordered regions lie at residues 2155–2228 (DEQD…PVST), 2265–2303 (SDYN…HQMS), 2327–2381 (SPSS…THLF), and 2572–2718 (PASQ…VIAT). A compositionally biased stretch (basic and acidic residues) spans 2164-2175 (EKQRFSYERSGY). Residues 2176–2198 (DLEESDGPDEDDNENEDDDEDSQ) are compositionally biased toward acidic residues. Polar residues-rich tracts occupy residues 2199-2226 (AESV…QDPV) and 2288-2300 (TIPS…SPCH). Ser2327 and Ser2599 each carry phosphoserine. Residues 2573–2608 (ASQSKACETQPKQTSVASANQVSRTESPQGLPTVQR) show a composition bias toward polar residues. A compositionally biased stretch (basic and acidic residues) spans 2623–2637 (DHARLDGLSKMDTEK). The segment covering 2651-2663 (TSIQGQPASTSQP) has biased composition (polar residues). Phosphoserine occurs at positions 2669 and 2682.

In terms of assembly, interacts with UTP4.

The protein localises to the nucleus. It localises to the cytoplasm. In terms of biological role, this protein specifically binds to the DNA sequence 5'-GGGACTTTCC-3' which is found in the enhancer elements of numerous viral promoters such as those of SV40, CMV, or HIV-1. In addition, related sequences are found in the enhancer elements of a number of cellular promoters, including those of the class I MHC, interleukin-2 receptor, and interferon-beta genes. It may act in T-cell activation. Involved in activating HIV-1 gene expression. Isoform 2 and isoform 3 also bind to the IPCS (IRF1 and p53 common sequence) DNA sequence in the promoter region of interferon regulatory factor 1 and p53 genes and are involved in transcription regulation of these genes. Isoform 2 does not activate HIV-1 gene expression. Isoform 2 and isoform 3 may be involved in apoptosis. This is Zinc finger protein 40 (HIVEP1) from Homo sapiens (Human).